Reading from the N-terminus, the 279-residue chain is MAESFVRLEHVFYKYEDTEKYAVKDVSISAQKGEWVALVGHNGSGKSTIAKLLNGLLFPEDGLIKIGHFVLSEKNIWDIRRQVGMVFQNPDNQFVGATVQDDVAFGLENHGVPHDTMVERVESALNEVGMQSYALHEPARLSGGQKQRVAIAGVLALQPDVIILDEATSMLDPRGRAEVMETIRIMREQEDITVISITHDLDEVLFADRVIVMNNGEVHSEGTPQEIFEQADAMREIGLGVPFIIELQEKLVAGGFETGSTVLSEGALLDQLWKLNSNN.

In terms of domain architecture, ABC transporter spans 6 to 240; sequence VRLEHVFYKY…ADAMREIGLG (235 aa). 40 to 47 contributes to the ATP binding site; sequence GHNGSGKS.

It belongs to the ABC transporter superfamily. Energy-coupling factor EcfA family. Forms a stable energy-coupling factor (ECF) transporter complex composed of 2 membrane-embedded substrate-binding proteins (S component), 2 ATP-binding proteins (A component) and 2 transmembrane proteins (T component).

The protein resides in the cell membrane. Its function is as follows. ATP-binding (A) component of a common energy-coupling factor (ECF) ABC-transporter complex. Unlike classic ABC transporters this ECF transporter provides the energy necessary to transport a number of different substrates. In Listeria monocytogenes serotype 4b (strain F2365), this protein is Energy-coupling factor transporter ATP-binding protein EcfA1.